An 846-amino-acid polypeptide reads, in one-letter code: uncharacterized protein (846 aa).

6 disordered regions span residues 159-217, 254-276, 332-414, 459-501, 556-651, and 803-846; these read VPTF…INHI, CNLNGNNNNNNNNNNNNNNSNSN, NKLN…PLSI, GSSI…SNSL, QQQQ…NFND, and TTTT…NKNK. Residues 163–217 are compositionally biased toward low complexity; that stretch reads HNQNQNNNNQNNNQNNNNNNNNNNNNNNNNNNNNNNNSQNNNNNQNNNNNHINHI. The span at 355-414 shows a compositional bias: low complexity; sequence LQSPNSQSLANSSANISSNALNQSSSSQQQQPQSTSQQQQQQHKMNSSSGNISPPLPLSI. Positions 459 to 482 are enriched in polar residues; that stretch reads GSSITPKNLSPLSSSAPNTPKQFA. 3 stretches are compositionally biased toward low complexity: residues 483 to 501, 568 to 642, and 811 to 846; these read SLSSSSSPSSSTSSSSNSL, QQQQ…QPNN, and NNNNNNNNNNNNNNNNNNNNNNNNNNNNNNNNNKNK.

This is an uncharacterized protein from Dictyostelium discoideum (Social amoeba).